The sequence spans 323 residues: Cuticle collagen 39 (323 aa).

The first 28 residues, 1–28, serve as a signal peptide directing secretion; that stretch reads MTGPTCLAVVAGISGVFVFGALFSVAQI. Positions 80–89 are enriched in polar residues; sequence QCNCGPQASN. A disordered region spans residues 80–293; the sequence is QCNCGPQASN…GAAEQGYRHR (214 aa). 3 triple-helical region regions span residues 93-125, 138-200, and 203-265; these read GPPG…AGPK, GSPG…GGQR, and GLPG…PGAD. The segment covering 108 to 117 has biased composition (gly residues); the sequence is GQPGGAGNPG. Positions 136–146 are enriched in low complexity; sequence PAGSPGPAGAP. The segment covering 159-168 has biased composition (gly residues); it reads GHPGQGGSQG. A compositionally biased stretch (low complexity) spans 169-191; sequence PAGPRGPAGDAGAPGQVGAPGNP. Residues 224–233 are compositionally biased toward gly residues; the sequence is GQSGGQGQQG. The segment covering 234 to 267 has biased composition (low complexity); the sequence is PAGPAGPDGQPGQPGQDGQAGAPGNDGAPGADAA.

It belongs to the cuticular collagen family. Collagen polypeptide chains are complexed within the cuticle by disulfide bonds and other types of covalent cross-links.

Nematode cuticles are composed largely of collagen-like proteins. The cuticle functions both as an exoskeleton and as a barrier to protect the worm from its environment. The protein is Cuticle collagen 39 (col-39) of Caenorhabditis elegans.